The primary structure comprises 36 residues: Pancreatic polypeptide (36 aa).

At tyrosine 36 the chain carries Tyrosine amide.

Belongs to the NPY family.

The protein localises to the secreted. Its function is as follows. Hormone secreted by pancreatic cells that acts as a regulator of pancreatic and gastrointestinal functions. This Anser anser anser (Western greylag goose) protein is Pancreatic polypeptide (PPY).